We begin with the raw amino-acid sequence, 285 residues long: Pyrroline-5-carboxylate reductase (285 aa).

The protein belongs to the pyrroline-5-carboxylate reductase family. In terms of assembly, homotetramer.

The enzyme catalyses L-proline + NADP(+) = (S)-1-pyrroline-5-carboxylate + NADPH + 2 H(+). It carries out the reaction L-proline + NAD(+) = (S)-1-pyrroline-5-carboxylate + NADH + 2 H(+). The protein operates within amino-acid biosynthesis; L-proline biosynthesis; L-proline from L-glutamate 5-semialdehyde: step 1/1. This Kluyveromyces lactis (strain ATCC 8585 / CBS 2359 / DSM 70799 / NBRC 1267 / NRRL Y-1140 / WM37) (Yeast) protein is Pyrroline-5-carboxylate reductase.